A 136-amino-acid chain; its full sequence is Peptide methionine sulfoxide reductase MsrB (136 aa).

A MsrB domain is found at 9-136 (DAEWKALLAE…NSASLDFKPK (128 aa)). Cys-53, Cys-56, Cys-102, and Cys-105 together coordinate Zn(2+). The Nucleophile role is filled by Cys-125.

Belongs to the MsrB Met sulfoxide reductase family. Zn(2+) is required as a cofactor.

The enzyme catalyses L-methionyl-[protein] + [thioredoxin]-disulfide + H2O = L-methionyl-(R)-S-oxide-[protein] + [thioredoxin]-dithiol. The polypeptide is Peptide methionine sulfoxide reductase MsrB (Polaromonas sp. (strain JS666 / ATCC BAA-500)).